The following is a 295-amino-acid chain: F-box protein SKIP24 (295 aa).

Residues 19–66 form the F-box; degenerate domain; that stretch reads VKSSTFSYKDLCCISISSRRLFRLSCDDSLWDLLLVHDFPNHIVSASS. 2 coiled-coil regions span residues 82-129 and 167-209; these read REKE…SSLQ and EGRL…ESMK. Residues 217-245 are disordered; it reads KSIRNGDQGSNGKTKKLKTSINYSGDQVS. The segment covering 235 to 245 has biased composition (polar residues); the sequence is TSINYSGDQVS.

In terms of assembly, part of a SCF (ASK-cullin-F-box) protein ligase complex. Interacts with SKP1A/ASK1 and SPK1B/ASK2.

The protein operates within protein modification; protein ubiquitination. In terms of biological role, component of SCF(ASK-cullin-F-box) E3 ubiquitin ligase complexes, which may mediate the ubiquitination and subsequent proteasomal degradation of target proteins. The chain is F-box protein SKIP24 (SKIP24) from Arabidopsis thaliana (Mouse-ear cress).